The chain runs to 420 residues: UDP-N-acetylglucosamine 1-carboxyvinyltransferase 2 (420 aa).

Position 22–23 (22–23 (KN)) interacts with phosphoenolpyruvate. Arg92 contacts UDP-N-acetyl-alpha-D-glucosamine. The active-site Proton donor is the Cys116. The residue at position 116 (Cys116) is a 2-(S-cysteinyl)pyruvic acid O-phosphothioketal. UDP-N-acetyl-alpha-D-glucosamine-binding positions include 121–125 (RPIDL), Asp307, and Ile329.

Belongs to the EPSP synthase family. MurA subfamily.

It localises to the cytoplasm. It carries out the reaction phosphoenolpyruvate + UDP-N-acetyl-alpha-D-glucosamine = UDP-N-acetyl-3-O-(1-carboxyvinyl)-alpha-D-glucosamine + phosphate. Its pathway is cell wall biogenesis; peptidoglycan biosynthesis. In terms of biological role, cell wall formation. Adds enolpyruvyl to UDP-N-acetylglucosamine. The polypeptide is UDP-N-acetylglucosamine 1-carboxyvinyltransferase 2 (Streptococcus thermophilus (strain CNRZ 1066)).